A 287-amino-acid chain; its full sequence is MLYFLPTPIGNLADITLRALEVLERCEVFLCEDTRVSKRLLHLLAQNPIISHSFPNIATKKREFIAFHSHNDQEFLNQIKPSFFDKEIAVMSDAGMPSLSDPGMSLAAYALKHNIQYDVLPGANALTTAFCASGFLEGRFFYAGFLPHKSKERRLKIAKILNALAYLEEKTPVVFYESPHRLLETLKDLNDLAKGMHLFAAKELTKLHQQYYLGEVSQIIERLQQSTIQGEWVLVLLNEKKIEPCMGLSALLELDLPPKIKAKIEAVMTQKNAKELYFQRLLEEKNQ.

The protein belongs to the methyltransferase superfamily. RsmI family.

The protein resides in the cytoplasm. The catalysed reaction is cytidine(1402) in 16S rRNA + S-adenosyl-L-methionine = 2'-O-methylcytidine(1402) in 16S rRNA + S-adenosyl-L-homocysteine + H(+). Its function is as follows. Catalyzes the 2'-O-methylation of the ribose of cytidine 1402 (C1402) in 16S rRNA. The chain is Ribosomal RNA small subunit methyltransferase I from Helicobacter pylori (strain ATCC 700392 / 26695) (Campylobacter pylori).